Here is a 90-residue protein sequence, read N- to C-terminus: Probable Fe(2+)-trafficking protein (90 aa).

It belongs to the Fe(2+)-trafficking protein family.

In terms of biological role, could be a mediator in iron transactions between iron acquisition and iron-requiring processes, such as synthesis and/or repair of Fe-S clusters in biosynthetic enzymes. The sequence is that of Probable Fe(2+)-trafficking protein from Polaromonas sp. (strain JS666 / ATCC BAA-500).